The primary structure comprises 356 residues: Phosphate acyltransferase (356 aa).

It belongs to the PlsX family. As to quaternary structure, homodimer. Probably interacts with PlsY.

It is found in the cytoplasm. The catalysed reaction is a fatty acyl-[ACP] + phosphate = an acyl phosphate + holo-[ACP]. The protein operates within lipid metabolism; phospholipid metabolism. Its function is as follows. Catalyzes the reversible formation of acyl-phosphate (acyl-PO(4)) from acyl-[acyl-carrier-protein] (acyl-ACP). This enzyme utilizes acyl-ACP as fatty acyl donor, but not acyl-CoA. This Shigella sonnei (strain Ss046) protein is Phosphate acyltransferase.